Here is a 281-residue protein sequence, read N- to C-terminus: Bifunctional protein FolD (281 aa).

Residues 165-167 (GRG), T192, and V233 each bind NADP(+).

This sequence belongs to the tetrahydrofolate dehydrogenase/cyclohydrolase family. In terms of assembly, homodimer.

It carries out the reaction (6R)-5,10-methylene-5,6,7,8-tetrahydrofolate + NADP(+) = (6R)-5,10-methenyltetrahydrofolate + NADPH. The catalysed reaction is (6R)-5,10-methenyltetrahydrofolate + H2O = (6R)-10-formyltetrahydrofolate + H(+). The protein operates within one-carbon metabolism; tetrahydrofolate interconversion. Catalyzes the oxidation of 5,10-methylenetetrahydrofolate to 5,10-methenyltetrahydrofolate and then the hydrolysis of 5,10-methenyltetrahydrofolate to 10-formyltetrahydrofolate. The protein is Bifunctional protein FolD of Mycobacterium avium (strain 104).